The chain runs to 179 residues: O-acetyl-ADP-ribose deacetylase (179 aa).

Positions 1–175 (MTSRLQVIQG…LYARLLTQQG (175 aa)) constitute a Macro domain. Residues 11–12 (DI), Asn-25, 33–35 (GVD), and 122–126 (STGVY) each bind substrate. The active-site Proton acceptor is the Asp-35.

This sequence belongs to the MacroD-type family. YmdB subfamily. In terms of assembly, homodimer. Interacts with RNase III.

It catalyses the reaction 3''-O-acetyl-ADP-D-ribose + H2O = ADP-D-ribose + acetate + H(+). The catalysed reaction is 2''-O-acetyl-ADP-D-ribose + H2O = ADP-D-ribose + acetate + H(+). In terms of biological role, deacetylates O-acetyl-ADP ribose to yield ADP-ribose and free acetate. Down-regulates ribonuclease 3 (RNase III) activity. Acts by interacting directly with the region of the ribonuclease that is required for dimerization/activation. The protein is O-acetyl-ADP-ribose deacetylase of Salmonella typhi.